The sequence spans 98 residues: Co-chaperonin GroES (98 aa).

The protein belongs to the GroES chaperonin family. Heptamer of 7 subunits arranged in a ring. Interacts with the chaperonin GroEL.

Its subcellular location is the cytoplasm. Its function is as follows. Together with the chaperonin GroEL, plays an essential role in assisting protein folding. The GroEL-GroES system forms a nano-cage that allows encapsulation of the non-native substrate proteins and provides a physical environment optimized to promote and accelerate protein folding. GroES binds to the apical surface of the GroEL ring, thereby capping the opening of the GroEL channel. The protein is Co-chaperonin GroES of Corynebacterium diphtheriae (strain ATCC 700971 / NCTC 13129 / Biotype gravis).